The primary structure comprises 217 residues: Large ribosomal subunit protein uL3 (217 aa).

Belongs to the universal ribosomal protein uL3 family. As to quaternary structure, part of the 50S ribosomal subunit. Forms a cluster with proteins L14 and L19.

One of the primary rRNA binding proteins, it binds directly near the 3'-end of the 23S rRNA, where it nucleates assembly of the 50S subunit. This is Large ribosomal subunit protein uL3 from Mycolicibacterium smegmatis (strain ATCC 700084 / mc(2)155) (Mycobacterium smegmatis).